A 297-amino-acid polypeptide reads, in one-letter code: Urease accessory protein UreD 2 (297 aa).

It belongs to the UreD family. As to quaternary structure, ureD, UreF and UreG form a complex that acts as a GTP-hydrolysis-dependent molecular chaperone, activating the urease apoprotein by helping to assemble the nickel containing metallocenter of UreC. The UreE protein probably delivers the nickel.

Its subcellular location is the cytoplasm. Required for maturation of urease via the functional incorporation of the urease nickel metallocenter. This chain is Urease accessory protein UreD 2, found in Methylorubrum populi (strain ATCC BAA-705 / NCIMB 13946 / BJ001) (Methylobacterium populi).